Reading from the N-terminus, the 277-residue chain is Tryptophan synthase alpha chain (277 aa).

Catalysis depends on proton acceptor residues E51 and E62.

The protein belongs to the TrpA family. As to quaternary structure, tetramer of two alpha and two beta chains.

The enzyme catalyses (1S,2R)-1-C-(indol-3-yl)glycerol 3-phosphate + L-serine = D-glyceraldehyde 3-phosphate + L-tryptophan + H2O. Its pathway is amino-acid biosynthesis; L-tryptophan biosynthesis; L-tryptophan from chorismate: step 5/5. Functionally, the alpha subunit is responsible for the aldol cleavage of indoleglycerol phosphate to indole and glyceraldehyde 3-phosphate. The chain is Tryptophan synthase alpha chain from Phenylobacterium zucineum (strain HLK1).